Consider the following 350-residue polypeptide: uncharacterized protein (350 aa).

The first 26 residues, 1–26 (MKKSGWLVVALIALVVLGVVTSIAVN), serve as a signal peptide directing secretion.

This is an uncharacterized protein from Archaeoglobus fulgidus (strain ATCC 49558 / DSM 4304 / JCM 9628 / NBRC 100126 / VC-16).